Here is a 566-residue protein sequence, read N- to C-terminus: Solute carrier family 2, facilitated glucose transporter member 9 (566 aa).

The segment at 1–31 (MARKQNRNSKELGLAPLADDTSHAGPPGPGR) is disordered. The Cytoplasmic portion of the chain corresponds to 1-51 (MARKQNRNSKELGLAPLADDTSHAGPPGPGRALLECDHLRSGLPDGRRRKD). A Phosphoserine modification is found at Ser-9. A helical transmembrane segment spans residues 52-72 (WSCSLLVASLAGAFGSSFLYG). The Extracellular segment spans residues 73–107 (YNLSVVNAPTPYIKAFYNESWERRHGRPIDPDTLT). Asn-74 and Asn-90 each carry an N-linked (GlcNAc...) asparagine glycan. Residues 108-128 (LLWSVTVSIFAIGGLVGTLMV) traverse the membrane as a helical segment. The Cytoplasmic segment spans residues 129–140 (KMIGKVLGRKHT). Residues 141-161 (LLANNGFAISAALLMACSLQA) form a helical membrane-spanning segment. Residues 162 to 171 (GAFEMLIVGR) lie on the Extracellular side of the membrane. Residues 172 to 192 (FIMGIDGGIALSVLPMYLSEI) traverse the membrane as a helical segment. Topologically, residues 193 to 200 (SPKEIRGS) are cytoplasmic. A helical membrane pass occupies residues 201–221 (LGQVTAIFICIGVFTGQLLGL). Topologically, residues 222 to 231 (PELLGKESTW) are extracellular. The helical transmembrane segment at 232-252 (PYLFGVIVVPAVVQLLSLPFL) threads the bilayer. At 253 to 316 (PDSPRYLLLE…LRAPYVRWQV (64 aa)) the chain is on the cytoplasmic side. Residues 317–337 (VTVIVTMACYQLCGLNAIWFY) traverse the membrane as a helical segment. Topologically, residues 338–354 (TNSIFGKAGIPPAKIPY) are extracellular. The helical transmembrane segment at 355–375 (VTLSTGGIETLAAIFSGLVIE) threads the bilayer. At 376-381 (HLGRRP) the chain is on the cytoplasmic side. Residues 382-402 (LLIGGFGLMALFFGTLTVTLT) traverse the membrane as a helical segment. Topologically, residues 403–415 (LQDRAPWVPYLSI) are extracellular. A helical transmembrane segment spans residues 416–436 (VGILAIIASFCSGPGGIPFIL). The Cytoplasmic portion of the chain corresponds to 437–451 (TGEFFQQSQRPAAFI). The chain crosses the membrane as a helical span at residues 452 to 472 (IAGTVNWLSNFAVGLLFPFIQ). At 473–478 (KSLDTY) the chain is on the extracellular side. A helical membrane pass occupies residues 479–499 (CFLVFATICMTGAIYLYFVLP). At 500–566 (ETKNRTYAEI…YMDDLTFQET (67 aa)) the chain is on the cytoplasmic side. Ser-514 is subject to Phosphoserine. Residues 524-539 (EKIDSAVTDGKTKGRP) show a composition bias toward basic and acidic residues. The interval 524-543 (EKIDSAVTDGKTKGRPEQVS) is disordered.

It belongs to the major facilitator superfamily. Sugar transporter (TC 2.A.1.1) family.

Its subcellular location is the basolateral cell membrane. It is found in the apical cell membrane. It carries out the reaction urate(out) = urate(in). High-capacity urate transporter, which may play a role in the urate reabsorption by proximal tubules. May have a residual high-affinity, low-capacity glucose and fructose transporter activity. Transports urate at rates 45- to 60-fold faster than glucose. Does not transport galactose. May mediate small uptake of adenine but not of other nucleobases. In Pongo abelii (Sumatran orangutan), this protein is Solute carrier family 2, facilitated glucose transporter member 9.